Consider the following 224-residue polypeptide: Urease accessory protein UreF (224 aa).

This sequence belongs to the UreF family. UreD, UreF and UreG form a complex that acts as a GTP-hydrolysis-dependent molecular chaperone, activating the urease apoprotein by helping to assemble the nickel containing metallocenter of UreC. The UreE protein probably delivers the nickel.

The protein resides in the cytoplasm. Required for maturation of urease via the functional incorporation of the urease nickel metallocenter. In Citrobacter koseri (strain ATCC BAA-895 / CDC 4225-83 / SGSC4696), this protein is Urease accessory protein UreF.